Reading from the N-terminus, the 221-residue chain is Glutathione S-transferase 1 (221 aa).

Residues 7-88 (QKMQLYSFSL…YLEEKFPENP (82 aa)) enclose the GST N-terminal domain. Residues 17-22 (SSCAWR), Val-60, 72-73 (DS), Gln-112, and 116-118 (NLA) contribute to the glutathione site. Residues 93-221 (DLQKRALNYQ…ISPMLDEAKS (129 aa)) form the GST C-terminal domain.

The protein belongs to the GST superfamily. Zeta family.

The catalysed reaction is RX + glutathione = an S-substituted glutathione + a halide anion + H(+). Conjugation of reduced glutathione to a wide number of exogenous and endogenous hydrophobic electrophiles. This Dianthus caryophyllus (Carnation) protein is Glutathione S-transferase 1 (GST1).